The primary structure comprises 34 residues: Photosystem II reaction center protein M (34 aa).

Residues 5-25 traverse the membrane as a helical segment; the sequence is ILAFIATALFILIPTAFLLIL.

The protein belongs to the PsbM family. As to quaternary structure, PSII is composed of 1 copy each of membrane proteins PsbA, PsbB, PsbC, PsbD, PsbE, PsbF, PsbH, PsbI, PsbJ, PsbK, PsbL, PsbM, PsbT, PsbX, PsbY, PsbZ, Psb30/Ycf12, at least 3 peripheral proteins of the oxygen-evolving complex and a large number of cofactors. It forms dimeric complexes.

Its subcellular location is the plastid. The protein resides in the chloroplast thylakoid membrane. One of the components of the core complex of photosystem II (PSII). PSII is a light-driven water:plastoquinone oxidoreductase that uses light energy to abstract electrons from H(2)O, generating O(2) and a proton gradient subsequently used for ATP formation. It consists of a core antenna complex that captures photons, and an electron transfer chain that converts photonic excitation into a charge separation. This subunit is found at the monomer-monomer interface. The sequence is that of Photosystem II reaction center protein M from Anthoceros angustus (Hornwort).